Here is a 329-residue protein sequence, read N- to C-terminus: Malate dehydrogenase (329 aa).

12-18 (GAAGQIG) serves as a coordination point for NAD(+). The substrate site is built by Arg95 and Arg101. Residues Asn108, Gln115, and 132–134 (VGN) each bind NAD(+). Residues Asn134 and Arg165 each contribute to the substrate site. The Proton acceptor role is filled by His190.

The protein belongs to the LDH/MDH superfamily. MDH type 2 family.

It carries out the reaction (S)-malate + NAD(+) = oxaloacetate + NADH + H(+). Functionally, catalyzes the reversible oxidation of malate to oxaloacetate. The chain is Malate dehydrogenase from Bordetella avium (strain 197N).